Consider the following 154-residue polypeptide: Myoglobin (154 aa).

The region spanning 2–148 is the Globin domain; sequence GLSDGEWQLV…FRKDIAAKYK (147 aa). Ser4 bears the Phosphoserine mark. His65 serves as a coordination point for nitrite. Residue His65 coordinates O2. Thr68 bears the Phosphothreonine mark. His94 serves as a coordination point for heme b.

The protein belongs to the globin family. As to quaternary structure, monomeric.

The protein resides in the cytoplasm. It is found in the sarcoplasm. The enzyme catalyses Fe(III)-heme b-[protein] + nitric oxide + H2O = Fe(II)-heme b-[protein] + nitrite + 2 H(+). It carries out the reaction H2O2 + AH2 = A + 2 H2O. Monomeric heme protein which primary function is to store oxygen and facilitate its diffusion within muscle tissues. Reversibly binds oxygen through a pentacoordinated heme iron and enables its timely and efficient release as needed during periods of heightened demand. Depending on the oxidative conditions of tissues and cells, and in addition to its ability to bind oxygen, it also has a nitrite reductase activity whereby it regulates the production of bioactive nitric oxide. Under stress conditions, like hypoxia and anoxia, it also protects cells against reactive oxygen species thanks to its pseudoperoxidase activity. The protein is Myoglobin (MB) of Peponocephala electra (Melon-headed whale).